The primary structure comprises 549 residues: Cation/acetate symporter ActP (549 aa).

13 consecutive transmembrane segments (helical) span residues W33 to A53, L77 to F97, G103 to E123, I148 to G168, I183 to A203, W206 to V226, I262 to L282, G303 to V323, L355 to L375, V404 to E424, I428 to L448, G464 to V484, and I493 to F513.

The protein belongs to the sodium:solute symporter (SSF) (TC 2.A.21) family.

It localises to the cell inner membrane. In terms of biological role, transports acetate. In Salmonella gallinarum (strain 287/91 / NCTC 13346), this protein is Cation/acetate symporter ActP.